Consider the following 231-residue polypeptide: Response regulator Rre1 (231 aa).

The Response regulatory domain maps to Ser6 to Leu123. Residue Asp56 is modified to 4-aspartylphosphate. The region spanning Pro163–Gly228 is the HTH luxR-type domain. Positions Asn187–Ser206 form a DNA-binding region, H-T-H motif.

As to quaternary structure, interacts with histidine kinase Hik2; may accept phosphate from Hik2.

Member of at least 2 two-component regulatory systems Hik2/Rre1 and Hik34/Rre1. Responds to hyperosmotic stress, regulates expression of at least 24 genes including dnaK2 and hspA with Hik34 and sigB (sll0306), sll0528, slr1119, slr0852 and ssr3188 with Hik2. Responds to salt stress, regulates expression of at least 24 genes including adhA, dnaK2 and hspA with Hik34. Binds the adhA promoter. Phosphorylated by Hik2 in vitro. Phosphorylated protein has 10-fold higher affinity for DNA than unphosphorylated protein. The chain is Response regulator Rre1 from Synechocystis sp. (strain ATCC 27184 / PCC 6803 / Kazusa).